The following is a 439-amino-acid chain: Xylose isomerase (439 aa).

Residues H101 and D104 contribute to the active site. Mg(2+) contacts are provided by E232, E268, H271, D296, D307, D309, and D339.

Belongs to the xylose isomerase family. Homotetramer. The cofactor is Mg(2+).

The protein localises to the cytoplasm. The enzyme catalyses alpha-D-xylose = alpha-D-xylulofuranose. In Yersinia enterocolitica serotype O:8 / biotype 1B (strain NCTC 13174 / 8081), this protein is Xylose isomerase.